The primary structure comprises 441 residues: Xylose isomerase (441 aa).

Catalysis depends on residues His105 and Asp108. Mg(2+) is bound by residues Glu236, Glu272, His275, Asp300, Asp311, Asp313, and Asp343.

This sequence belongs to the xylose isomerase family. In terms of assembly, homotetramer. Requires Mg(2+) as cofactor.

It is found in the cytoplasm. The enzyme catalyses alpha-D-xylose = alpha-D-xylulofuranose. The polypeptide is Xylose isomerase (Mesorhizobium japonicum (strain LMG 29417 / CECT 9101 / MAFF 303099) (Mesorhizobium loti (strain MAFF 303099))).